Consider the following 153-residue polypeptide: Nucleoside diphosphate kinase (153 aa).

Positions 9, 57, 85, 91, 102, and 112 each coordinate ATP. The active-site Pros-phosphohistidine intermediate is His115.

This sequence belongs to the NDK family. In terms of assembly, homotetramer. Requires Mg(2+) as cofactor.

Its subcellular location is the cytoplasm. It carries out the reaction a 2'-deoxyribonucleoside 5'-diphosphate + ATP = a 2'-deoxyribonucleoside 5'-triphosphate + ADP. It catalyses the reaction a ribonucleoside 5'-diphosphate + ATP = a ribonucleoside 5'-triphosphate + ADP. In terms of biological role, major role in the synthesis of nucleoside triphosphates other than ATP. The ATP gamma phosphate is transferred to the NDP beta phosphate via a ping-pong mechanism, using a phosphorylated active-site intermediate. The polypeptide is Nucleoside diphosphate kinase (Parabacteroides distasonis (strain ATCC 8503 / DSM 20701 / CIP 104284 / JCM 5825 / NCTC 11152)).